Here is a 654-residue protein sequence, read N- to C-terminus: Tetracycline resistance protein TetQ (654 aa).

The region spanning M1–E244 is the tr-type G domain. GTP-binding positions include A10–T17, D74–H78, and N128–D131.

Belongs to the TRAFAC class translation factor GTPase superfamily. Classic translation factor GTPase family. TetM/TetO subfamily.

Functionally, abolishes the inhibitory effect of tetracyclin on protein synthesis by a non-covalent modification of the ribosomes. The polypeptide is Tetracycline resistance protein TetQ (tetQ) (Prevotella intermedia).